The sequence spans 537 residues: Lysosomal cobalamin transport escort protein LMBD1 (537 aa).

Residues 1–7 (MAAAAAD) lie on the Extracellular side of the membrane. Residues 8–28 (LVIGWCIFGLLLLAILAFCWV) form a helical membrane-spanning segment. Residues 29-47 (YVRKYQSQRESEVVSTVTA) are Cytoplasmic-facing. A helical transmembrane segment spans residues 48–68 (IFSLAVALITSALLPVDIFLV). The Extracellular segment spans residues 69-97 (SYMKNQNGTFKDWANANVTVQIENTVLYG). Residues asparagine 75 and asparagine 85 are each glycosylated (N-linked (GlcNAc...) asparagine). Residues 98–118 (YYTLYSVILFCVFFWIPFVYF) form a helical membrane-spanning segment. Over 119-141 (YYEEKDDDDTSKCTQVKTALKYT) the chain is Cytoplasmic. A helical membrane pass occupies residues 142–162 (LGFVVICALLLLVGAFVPLNL). The Extracellular portion of the chain corresponds to 163-185 (PNNNNSTEWEKVKLLFEDLGTGQ). Residues asparagine 166 and asparagine 167 are each glycosylated (N-linked (GlcNAc...) asparagine). The helical transmembrane segment at 186 to 206 (GLAALSFSISSLTLIGMLAAI) threads the bilayer. Residues 207-302 (TYTAYGMSAL…KFCGALRPLK (96 aa)) lie on the Cytoplasmic side of the membrane. The YERL motif; mediates interaction with adapter protein complex 2 and is essential for its function in clathrin-mediated endocytosis of INSR motif lies at 229–232 (YERL). At threonine 235 the chain carries Phosphothreonine. The WTKF motif; mediates interaction with adapter protein complex 2 and is essential for its function in clathrin-mediated endocytosis of INSR signature appears at 291–294 (WTKF). A helical membrane pass occupies residues 303–323 (IIWGIFFILVALLFVISLFLS). The Extracellular segment spans residues 324-361 (NLDKALHSAGIDSGFIVFGTNLSNPLNMLLPLLQTVFP). A glycan (N-linked (GlcNAc...) asparagine) is linked at asparagine 344. The helical transmembrane segment at 362–382 (LDYILITIIIMYFIFTSMAGI) threads the bilayer. Residues 383-405 (RNIGIWFFWIRLYKIRRGRTRPQ) lie on the Cytoplasmic side of the membrane. A helical membrane pass occupies residues 406–426 (ALLFLCMILLLIVLHTSYMIY). Topologically, residues 427-483 (SLAPQYVMYGSQNYLIESNITSDAHKGNSTLAVPKRCDADAPKDQCTVTRTYVFLHK) are extracellular. Asparagine 445 and asparagine 454 each carry an N-linked (GlcNAc...) asparagine glycan. A helical membrane pass occupies residues 484 to 504 (FWFFSAAYYFGNWAFLVVFLI). Over 505–537 (GLIVSCCKGKKSVIEGVDEDSDLSDDEPSAYSA) the chain is Cytoplasmic. Residues serine 525 and serine 528 each carry the phosphoserine modification.

It belongs to the LIMR family. LMBRD1 subfamily. Interacts with ABCD4; this interaction induces the translocation of ABCD4 from the endoplasmic reticulum to the lysosome. Interacts with ABCD4 and MMACHC; this interaction ensures the transport of cobalamin from the lysosome to the cytoplasm. Interacts with INSR, adapter protein complex 2 and clathrin heavy chain. Post-translationally, N-glycosylated.

Its subcellular location is the endoplasmic reticulum membrane. The protein localises to the lysosome membrane. It is found in the cell membrane. The protein resides in the cytoplasmic vesicle. It localises to the clathrin-coated vesicle. In terms of biological role, lysosomal membrane chaperone required to export cobalamin (vitamin B12) from the lysosome to the cytosol, allowing its conversion to cofactors. Targets ABCD4 transporter from the endoplasmic reticulum to the lysosome. Then forms a complex with lysosomal ABCD4 and cytoplasmic MMACHC to transport cobalamin across the lysosomal membrane. Acts as an adapter protein which plays an important role in mediating and regulating the internalization of the insulin receptor (INSR). Involved in clathrin-mediated endocytosis of INSR via its interaction with adapter protein complex 2. Essential for the initiation of gastrulation and early formation of mesoderm structures during embryogenesis. The sequence is that of Lysosomal cobalamin transport escort protein LMBD1 (Lmbrd1) from Rattus norvegicus (Rat).